The sequence spans 446 residues: Coagulation factor VII (446 aa).

A signal peptide spans 1–24 (MVPQTHGLLLLYFLLQLQGPLGAV). Residues 25-41 (VFITQEEAHGVLHRQRR) constitute a propeptide that is removed on maturation. In terms of domain architecture, Gla spans 42-86 (ANSLLEELWSSSLERECNEERCSFEEAREIFKSPERTKQFWTIYS). 4-carboxyglutamate is present on residues glutamate 47, glutamate 48, glutamate 55, glutamate 57, glutamate 60, glutamate 61, glutamate 66, glutamate 67, glutamate 70, and glutamate 76. Residues cysteine 58 and cysteine 63 are joined by a disulfide bond. An EGF-like 1; calcium-binding domain is found at 87-123 (DGDQCASNPCQNGGTCQDHLKSYVCFCPLDFEGRNCE). Disulfide bonds link cysteine 91-cysteine 102, cysteine 96-cysteine 111, cysteine 113-cysteine 122, cysteine 132-cysteine 143, cysteine 139-cysteine 153, cysteine 155-cysteine 168, cysteine 176-cysteine 303, cysteine 200-cysteine 205, cysteine 219-cysteine 235, and cysteine 351-cysteine 370. The O-linked (Glc...) serine; alternate glycan is linked to serine 93. An O-linked (Xyl...) serine; alternate glycan is attached at serine 93. Residue threonine 101 is glycosylated (O-linked (Fuc) threonine). Aspartate 104 carries the post-translational modification (3R)-3-hydroxyaspartate. The region spanning 128–169 (EQLICANENGDCDQYCRDHVGTKRTCSCHEDYVLQPDEVSCK) is the EGF-like 2 domain. An N-linked (GlcNAc...) asparagine glycan is attached at asparagine 186. One can recognise a Peptidase S1 domain in the interval 194 to 433 (IVGGYVCPKG…YIDWLVKYMD (240 aa)). The Charge relay system role is filled by histidine 234. Asparagine 244 carries N-linked (GlcNAc...) asparagine glycosylation. Aspartate 283 serves as the catalytic Charge relay system. Aspartate 379 contributes to the substrate binding site. A disulfide bridge connects residues cysteine 381 and cysteine 409. Serine 385 (charge relay system) is an active-site residue.

It belongs to the peptidase S1 family. As to quaternary structure, heterodimer of a light chain and a heavy chain linked by a disulfide bond. Post-translationally, the vitamin K-dependent, enzymatic carboxylation of some glutamate residues allows the modified protein to bind calcium. In terms of processing, the iron and 2-oxoglutarate dependent 3-hydroxylation of aspartate and asparagine is (R) stereospecific within EGF domains. Can be either O-glucosylated or O-xylosylated at Ser-93 by POGLUT1. As to expression, plasma.

Its subcellular location is the secreted. The catalysed reaction is Selective cleavage of Arg-|-Ile bond in factor X to form factor Xa.. Initiates the extrinsic pathway of blood coagulation. Serine protease that circulates in the blood in a zymogen form. Factor VII is converted to factor VIIa by factor Xa, factor XIIa, factor IXa, or thrombin by minor proteolysis. In the presence of tissue factor and calcium ions, factor VIIa then converts factor X to factor Xa by limited proteolysis. Factor VIIa also converts factor IX to factor IXa in the presence of tissue factor and calcium. The chain is Coagulation factor VII (F7) from Rattus norvegicus (Rat).